Reading from the N-terminus, the 404-residue chain is CD209 antigen (404 aa).

At 1–37 (MSDSKEPRLQQLGLLEEEQLRGLGFRQTRGYKSLAGC) the chain is on the cytoplasmic side. 3 consecutive short sequence motifs (endocytosis signal) follow at residues 14-15 (LL), 16-18 (EEE), and 31-34 (YKSL). Residues 38–58 (LGHGPLVLQLLSFTLLAGLLV) form a helical; Signal-anchor for type II membrane protein membrane-spanning segment. Over 59–404 (QVSKVPSSIS…APATPNPPPA (346 aa)) the chain is Extracellular. The N-linked (GlcNAc...) asparagine glycan is linked to Asn-80. A run of 7 repeats spans residues 96-118 (KLQE…PEKS), 119-141 (KLQE…PEKS), 142-164 (KLQE…PEKS), 165-187 (KMQE…PEKS), 188-210 (KQQE…PEKS), 211-233 (KQQE…PEKS), and 234-257 (KQQE…HPCP). The segment at 96–257 (KLQEIYQELT…AVERLCHPCP (162 aa)) is 7 X approximate tandem repeats. Intrachain disulfides connect Cys-256/Cys-267, Cys-284/Cys-377, and Cys-356/Cys-369. The C-type lectin domain occupies 263 to 378 (FQGNCYFMSN…CNLAKFWICK (116 aa)). Residues Glu-347, Asn-349, Val-351, Glu-354, Asn-365, and Asp-366 each contribute to the Ca(2+) site.

Homotetramer. Interacts with C1QBP; the interaction is indicative for a C1q:C1QBP:CD209 signaling complex. Interacts with ICAM2 and ICAM3 by binding to mannose-like carbohydrates. Interacts (via C-type lectin domain) with CEACAM1 (via Lewis X moieties); this interaction is regulated by the glycosylation pattern of CEACAM1 on cell types and regulates contact between dendritic cells and neutrophils. As to quaternary structure, (Microbial infection) Interacts with HIV-1 and HIV-2 gp120. In terms of assembly, (Microbial infection) Interacts with ebolavirus envelope glycoproteins. (Microbial infection) Interacts with cytomegalovirus gB protein. As to quaternary structure, (Microbial infection) Interacts with HCV E2 protein. In terms of assembly, (Microbial infection) Interacts with dengue virus major envelope protein E. (Microbial infection) Interacts with measles hemagglutinin. As to quaternary structure, (Microbial infection) Interacts with herpes simplex virus 1 surface proteins. In terms of assembly, (Microbial infection) Interacts with Influenzavirus A hemagglutinin. (Microbial infection) Interacts with SARS-CoV spike glycoprotein. As to quaternary structure, (Microbial infection) Interacts with Japanese encephalitis virus E protein. In terms of assembly, (Microbial infection) Interacts with Lassa virus Glycoprotein. (Microbial infection) Interacts with marburg virus glycoprotein. As to quaternary structure, (Microbial infection) Interacts with Respiratory syncytial virus glycoprotein G. In terms of assembly, (Microbial infection) Interacts with Rift valley fever virus and uukuniemi virus envelope glycoprotein. (Microbial infection) Interacts with west-nile virus envelope glycoprotein. As to quaternary structure, (Microbial infection) Interacts with whole M.bovis cells in a Ca(2+)-dependent and independent manner; in vitro experiments suggest it interacts with CH60.1 (groL1), DnaK, GADPH (gap) and LrpG. In terms of tissue distribution, predominantly expressed in dendritic cells and in DC-residing tissues. Also found in placental macrophages, endothelial cells of placental vascular channels, peripheral blood mononuclear cells, and THP-1 monocytes.

Its subcellular location is the cell membrane. The protein resides in the secreted. Its function is as follows. Pathogen-recognition receptor expressed on the surface of immature dendritic cells (DCs) and involved in initiation of primary immune response. Thought to mediate the endocytosis of pathogens which are subsequently degraded in lysosomal compartments. The receptor returns to the cell membrane surface and the pathogen-derived antigens are presented to resting T-cells via MHC class II proteins to initiate the adaptive immune response. On DCs it is a high affinity receptor for ICAM2 and ICAM3 by binding to mannose-like carbohydrates. May act as a DC rolling receptor that mediates transendothelial migration of DC presursors from blood to tissues by binding endothelial ICAM2. Seems to regulate DC-induced T-cell proliferation by binding to ICAM3 on T-cells in the immunological synapse formed between DC and T-cells. Functionally, (Microbial infection) Acts as an attachment receptor for HIV-1 and HIV-2. In terms of biological role, (Microbial infection) Acts as an attachment receptor for Ebolavirus. Its function is as follows. (Microbial infection) Acts as an attachment receptor for Cytomegalovirus. (Microbial infection) Acts as an attachment receptor for HCV. Functionally, (Microbial infection) Acts as an attachment receptor for Dengue virus. In terms of biological role, (Microbial infection) Acts as an attachment receptor for Measles virus. Its function is as follows. (Microbial infection) Acts as an attachment receptor for Herpes simplex virus 1. (Microbial infection) Acts as an attachment receptor for Influenzavirus A. Functionally, (Microbial infection) Acts as an attachment receptor for SARS-CoV. In terms of biological role, (Microbial infection) Acts as an attachment receptor for Japanese encephalitis virus. Its function is as follows. (Microbial infection) Acts as an attachment receptor for Lassa virus. Acts as an attachment receptor for Marburg virusn. (Microbial infection) Acts as an attachment receptor for Respiratory syncytial virus. Functionally, (Microbial infection) Acts as an attachment receptor for Rift valley fever virus and uukuniemi virus. In terms of biological role, (Microbial infection) Acts as an attachment receptor for West-nile virus. Its function is as follows. (Microbial infection) Probably recognizes in a calcium-dependent manner high mannose N-linked oligosaccharides in a variety of bacterial pathogen antigens, including Leishmania pifanoi LPG, Lewis-x antigen in Helicobacter pylori LPS, mannose in Klebsiella pneumonae LPS, di-mannose and tri-mannose in Mycobacterium tuberculosis ManLAM and Lewis-x antigen in Schistosoma mansoni SEA. Recognition of M.tuberculosis by dendritic cells occurs partially via this molecule. The polypeptide is CD209 antigen (CD209) (Homo sapiens (Human)).